Reading from the N-terminus, the 308-residue chain is Putative mitochondrial transporter UCP3 (308 aa).

The Mitochondrial intermembrane segment spans residues 1–10; that stretch reads MVGLKPPEVP. The chain crosses the membrane as a helical span at residues 11-32; sequence PTTAVKLLGAGTAACFADLLTF. 3 Solcar repeats span residues 11 to 102, 111 to 202, and 211 to 296; these read PTTA…VKQL, SSIT…IKEK, and DNLP…LKRA. Residues 33 to 73 lie on the Mitochondrial matrix side of the membrane; that stretch reads PLDTAKVRLQIQGENQAARSAQYRGVLGTILTMVRNEGPRS. Residues 74–96 form a helical membrane-spanning segment; the sequence is PYNGLVAGLQRQMSFASIRIGLY. Over 97–116 the chain is Mitochondrial intermembrane; it reads DSVKQLYTPKGSDHSSITTR. A helical membrane pass occupies residues 117–133; that stretch reads ILAGCTTGAMAVTCAQP. Over 134–179 the chain is Mitochondrial matrix; the sequence is TDVVKVRFQASIHAGPRSNRKYSGTMDAYRTIAREEGVRGLWKGIL. The chain crosses the membrane as a helical span at residues 180 to 196; it reads PNITRNAIVNCAEMVTY. At 197–213 the chain is on the mitochondrial intermembrane side; the sequence is DVIKEKVLDYHLLTDNL. Residues 214–233 form a helical membrane-spanning segment; sequence PCHFVSAFGAGFCATVVASP. Over 234–267 the chain is Mitochondrial matrix; that stretch reads VDVVKTRYMNSPPGQYQNPLDCMLKMVTQEGPTA. The helical transmembrane segment at 268–290 threads the bilayer; it reads FYKGFTPSFLRLGSWNVVMFVSY. The segment at 275–297 is purine nucleotide binding; sequence SFLRLGSWNVVMFVSYEQLKRAL. Residues 291 to 308 are Mitochondrial intermembrane-facing; sequence EQLKRALMKVQMLRESPF.

It belongs to the mitochondrial carrier (TC 2.A.29) family. In terms of assembly, interacts with HAX1; the interaction is direct and calcium-dependent.

It localises to the mitochondrion inner membrane. In terms of biological role, putative transmembrane transporter that plays a role in mitochondrial metabolism via an as yet unclear mechanism. Originally, this mitochondrial protein was thought to act as a proton transmembrane transporter from the mitochondrial intermembrane space into the matrix, causing proton leaks through the inner mitochondrial membrane, thereby uncoupling mitochondrial membrane potential generation from ATP synthesis. However, this function is controversial and uncoupling may not be the function, or at least not the main function, but rather a consequence of more conventional metabolite transporter activity. This Sus scrofa (Pig) protein is Putative mitochondrial transporter UCP3.